The following is a 77-amino-acid chain: Blood-induced peptide 1 (77 aa).

The stretch at 38–71 (EDFLHQENSELKKSLKNLEMENEKLKNILKTDYN) forms a coiled coil.

Its function is as follows. Plays an important role in survival in host blood through increasing tolerance to stresses such as heat, salt, or cycloheximide, which is essential for virulence. This chain is Blood-induced peptide 1, found in Candida albicans (strain SC5314 / ATCC MYA-2876) (Yeast).